The primary structure comprises 599 residues: Matrix metallopeptidase-21 (599 aa).

Positions 1–20 are cleaved as a signal peptide; it reads MLTVIRRIFIIQTFIFITAE. Residues 21-170 constitute a propeptide that is removed on maturation; sequence KIFHSRDHSD…NHEHQAPVRK (150 aa). Residue Cys-130 coordinates Zn(2+). The disordered stretch occupies residues 141-170; the sequence is DVTGSNSTRNHIRTSTNTSHNHEHQAPVRK. The segment covering 143 to 159 has biased composition (polar residues); sequence TGSNSTRNHIRTSTNTS. His-309 lines the Zn(2+) pocket. Glu-310 is an active-site residue. 2 residues coordinate Zn(2+): His-313 and His-319. An intrachain disulfide couples Cys-355 to Cys-586. 4 Hemopexin repeats span residues 356 to 415, 417 to 473, 474 to 522, and 529 to 585; these read TGRF…WHGL, SGGV…FPGV, SGPL…FPAI, and VRSL…WFDI. Residue Asn-398 is glycosylated (N-linked (GlcNAc...) asparagine).

Belongs to the peptidase M10A family. In terms of processing, the precursor is cleaved by a furin endopeptidase.

Functionally, plays a specialized role in the generation of left-right asymmetry during embryogenesis. May act as a negative regulator of the NOTCH-signaling pathway. The polypeptide is Matrix metallopeptidase-21 (Danio rerio (Zebrafish)).